Consider the following 230-residue polypeptide: Oxygen-evolving enhancer protein 3-2, chloroplastic (230 aa).

Residues M1–A49 constitute a chloroplast transit peptide. The N-terminal 33 residues, Q50–A82, are a transit peptide targeting the thylakoid. S125 is subject to Phosphoserine. Phosphothreonine is present on T195. Y215 is modified (phosphotyrosine). The residue at position 216 (S216) is a Phosphoserine. T218 carries the post-translational modification Phosphothreonine.

The protein belongs to the PsbQ family.

Its subcellular location is the plastid. It is found in the chloroplast thylakoid membrane. Functionally, required for photosystem II assembly/stability and photoautotrophic growth under low light conditions. The protein is Oxygen-evolving enhancer protein 3-2, chloroplastic (PSBQ2) of Arabidopsis thaliana (Mouse-ear cress).